The following is a 462-amino-acid chain: Argininosuccinate lyase (462 aa).

The protein belongs to the lyase 1 family. Argininosuccinate lyase subfamily.

It localises to the cytoplasm. It catalyses the reaction 2-(N(omega)-L-arginino)succinate = fumarate + L-arginine. Its pathway is amino-acid biosynthesis; L-arginine biosynthesis; L-arginine from L-ornithine and carbamoyl phosphate: step 3/3. This chain is Argininosuccinate lyase, found in Methylobacterium sp. (strain 4-46).